A 358-amino-acid polypeptide reads, in one-letter code: MKLLFPILLLTGSYFLSACNNTQSLMSSTHTIAASDPHIQVMGRTHINDDASLTFGYPGVSLSTIVAGSRLTAEMQSSNGNSWIDVIIDNHPPTSIKLDAQQQTVELFHFPNSGEHRVEIIHRSENWHGQVTLKQLTLTGTQFLPAPVLPQRKILVLGDSVTCGEAIDRVAGEDKNTRWWNARESYGMLTAKALDAQVQLVCWGGRGLIRSWNGKTDDANLPDFYQFTLGDTGQAPQWDHHRYQPDLIISAIGTNDFSPGIPDRATYINTYTRFVRTLLDNHPQATIVLTEGAILNGDKKAALVSYIGETRQQLHSNRVFYASSSHHPGDNSDAHPTKDQHAAMARELTPQLRQIMDW.

The first 18 residues, 1–18 (MKLLFPILLLTGSYFLSA), serve as a signal peptide directing secretion. C19 carries the N-palmitoyl cysteine lipid modification. A lipid anchor (S-diacylglycerol cysteine) is attached at C19. Residue S160 is the Nucleophile of the active site. Residues D333 and H335 each act as charge relay system in the active site.

Belongs to the carbohydrate esterase 2 (CE2) family.

The protein localises to the cell membrane. It carries out the reaction Deacetylation of xylans and xylo-oligosaccharides.. The protein operates within glycan degradation; xylan degradation. Involved in the degradation of plant cell wall polysaccharides. Catalyzes the deacetylation of acetylated birchwood xylan and glucomannan, with equal efficiency, and of the synthetic substrate 4-nitrophenyl acetate (4-NPAc). Does not bind cellulose, cellohexaose and beta-glucan. The protein is Acetylxylan esterase / glucomannan deacetylase of Cellvibrio japonicus (strain Ueda107) (Pseudomonas fluorescens subsp. cellulosa).